The following is a 204-amino-acid chain: Pyridoxal 5'-phosphate synthase subunit PdxT (204 aa).

Residue 52 to 54 (GES) participates in L-glutamine binding. Cysteine 84 (nucleophile) is an active-site residue. Residues arginine 116 and 143–144 (IR) contribute to the L-glutamine site. Active-site charge relay system residues include histidine 184 and glutamate 186.

The protein belongs to the glutaminase PdxT/SNO family. In terms of assembly, in the presence of PdxS, forms a dodecamer of heterodimers. Only shows activity in the heterodimer.

It catalyses the reaction aldehydo-D-ribose 5-phosphate + D-glyceraldehyde 3-phosphate + L-glutamine = pyridoxal 5'-phosphate + L-glutamate + phosphate + 3 H2O + H(+). It carries out the reaction L-glutamine + H2O = L-glutamate + NH4(+). The protein operates within cofactor biosynthesis; pyridoxal 5'-phosphate biosynthesis. Functionally, catalyzes the hydrolysis of glutamine to glutamate and ammonia as part of the biosynthesis of pyridoxal 5'-phosphate. The resulting ammonia molecule is channeled to the active site of PdxS. The protein is Pyridoxal 5'-phosphate synthase subunit PdxT of Pyrobaculum aerophilum (strain ATCC 51768 / DSM 7523 / JCM 9630 / CIP 104966 / NBRC 100827 / IM2).